The sequence spans 41 residues: Iota-conotoxin-like r11d (41 aa).

Intrachain disulfides connect Cys2-Cys16, Cys9-Cys19, Cys15-Cys24, and Cys18-Cys35. Position 8 is a 4-hydroxyproline (Pro8). Pro26 is modified (4-hydroxyproline).

Position 41 corresponds to a L-threonine, and not a D-threonine as firstly supposed. Expressed by the venom duct.

It is found in the secreted. Functionally, iota-conotoxins bind to voltage-gated sodium channels (Nav) and act as agonists by shifting the voltage-dependence of activation to more hyperpolarized levels. Both natural (L-Thr form) and synthetic (D-Thr form) peptides cause paralysis and death following intracranial injection and grooming and hypersensitivity upon intraperitoneal injection into mice. The L-Thr form of the peptide is 7-fold more potent than the D-Thr form. Both natural peptide (L-Thr form) and synthetic peptide (D-Thr form) are active on nerve, and on muscle. This Conus radiatus (Rayed cone) protein is Iota-conotoxin-like r11d.